Reading from the N-terminus, the 963-residue chain is Protein translocase subunit SecA (963 aa).

Residues Gln-87, 105–109, and Asp-524 each bind ATP; that span reads GEGKT. 4 residues coordinate Zn(2+): Cys-946, Cys-948, Cys-957, and His-958.

It belongs to the SecA family. In terms of assembly, monomer and homodimer. Part of the essential Sec protein translocation apparatus which comprises SecA, SecYEG and auxiliary proteins SecDF-YajC and YidC. Requires Zn(2+) as cofactor.

The protein resides in the cell inner membrane. It is found in the cytoplasm. It catalyses the reaction ATP + H2O + cellular proteinSide 1 = ADP + phosphate + cellular proteinSide 2.. Its function is as follows. Part of the Sec protein translocase complex. Interacts with the SecYEG preprotein conducting channel. Has a central role in coupling the hydrolysis of ATP to the transfer of proteins into and across the cell membrane, serving both as a receptor for the preprotein-SecB complex and as an ATP-driven molecular motor driving the stepwise translocation of polypeptide chains across the membrane. The sequence is that of Protein translocase subunit SecA from Methylobacterium radiotolerans (strain ATCC 27329 / DSM 1819 / JCM 2831 / NBRC 15690 / NCIMB 10815 / 0-1).